We begin with the raw amino-acid sequence, 307 residues long: Membrane protein insertase YidC 2 (307 aa).

The N-terminal stretch at 1–23 (MKLTLNRILFSGLALSILLTLTG) is a signal peptide. Residue cysteine 24 is the site of N-palmitoyl cysteine attachment. Cysteine 24 is lipidated: S-diacylglycerol cysteine. A run of 5 helical transmembrane segments spans residues 58–78 (LGYG…ILPL), 135–155 (LGGI…AMYF), 179–199 (VLTA…MMAV), 209–225 (TMMY…SFSL), and 231–251 (LYWL…TYLL). Positions 263–307 (YAKNPPKAYQSTSSRKDVTPSQNMEQANLPKKIKSNRNAGKQRKR) are disordered. Polar residues predominate over residues 271–288 (YQSTSSRKDVTPSQNMEQ). Residues 293-307 (KKIKSNRNAGKQRKR) show a composition bias toward basic residues.

The protein belongs to the OXA1/ALB3/YidC family. Type 2 subfamily.

It is found in the cell membrane. Functionally, required for the insertion and/or proper folding and/or complex formation of integral membrane proteins into the membrane. Involved in integration of membrane proteins that insert both dependently and independently of the Sec translocase complex, as well as at least some lipoproteins. The polypeptide is Membrane protein insertase YidC 2 (Streptococcus pyogenes serotype M1).